A 114-amino-acid chain; its full sequence is NADH-quinone oxidoreductase subunit K 2 (114 aa).

A run of 3 helical transmembrane segments spans residues 1 to 21 (MIVP…LGVF), 29 to 49 (LIMI…AFIG), and 62 to 82 (FVLF…AIIV).

The protein belongs to the complex I subunit 4L family. In terms of assembly, NDH-1 is composed of 14 different subunits. Subunits NuoA, H, J, K, L, M, N constitute the membrane sector of the complex.

It localises to the cell inner membrane. The enzyme catalyses a quinone + NADH + 5 H(+)(in) = a quinol + NAD(+) + 4 H(+)(out). In terms of biological role, NDH-1 shuttles electrons from NADH, via FMN and iron-sulfur (Fe-S) centers, to quinones in the respiratory chain. The immediate electron acceptor for the enzyme in this species is believed to be ubiquinone. Couples the redox reaction to proton translocation (for every two electrons transferred, four hydrogen ions are translocated across the cytoplasmic membrane), and thus conserves the redox energy in a proton gradient. This is NADH-quinone oxidoreductase subunit K 2 from Syntrophobacter fumaroxidans (strain DSM 10017 / MPOB).